Here is an 840-residue protein sequence, read N- to C-terminus: MAAAVAMRSGSGSDGGGGGYDKAGMDSGKYVRYTPEQVEALERVYAECPKPSSSRRQQLLRDCPILANIEPKQIKVWFQNRRCRDKQRKEASRLQAVNRKLTAMNKLLMEENERLQKQVSQLVHENAYMKQQLQNPSLGNDTSCESNVTTPQNPLRDASNPSGLLTIAEETLTEFLSKATGTAVDWVPMPGMKPGPDSFGIVAVSHGCRGVAARACGLVNLEPTKIVEILKDRPSWFRDCRSLEVFTMFPAGNGGTIELVYMQMYAPTTLVPARDFWTLRYTTTMDDGSLVVCERSLSGSGGGPSTASAQQFVRAEMLPSGYLVRPCEGGGSIVHIVDHLDLEAWSVPEVLRPLYESSRVVAQKMTTAALRHIRQIAQETSGEVVYALGRQPAVLRTFSQRLSRGFNDAISGFNDDGWSVMGGDGIEDVIIACNAKKVRNTSTSANAFVTPGGVICAKASMLLQSVPPAVLVRFLREHRSEWADYNFDAYSASSLKTSSCSLPGLRPMRFSGSQIIMPLAHTVENEEILEVVRLEGQALTHDDGLMSRDIHLLQLCTGIDEKSMGSCFQLVFAPIDELFPDDAPLISSGFRVIPLDMKTDGTPAGRTLDLASSLEVGSTAQPTGDASMDDCNLRSVLTIAFQFPYEMHLQDSVATMARQYVRSIVSSVQRVSMAISPSRSGLNAGQKIISGFPEAPTLARWICQSYQFHLGVELLRQADDAGEALLKMLWDYEDAILCCSFKEKPVFTFANEMGLNMLETSLVALQDLSLDKIFDEAGRKALYNEIPKLMEQGYVYLPGGVCLSGMGRHVSFEQAVAWKVLGEDNNVHCLAFCFVNWSFV.

2 disordered regions span residues 1 to 26 (MAAA…AGMD) and 135 to 160 (NPSL…DASN). Positions 12-21 (GSDGGGGGYD) are enriched in gly residues. Positions 26–89 (DSGKYVRYTP…NRRCRDKQRK (64 aa)) form a DNA-binding region, homeobox. The stretch at 86-135 (KQRKEASRLQAVNRKLTAMNKLLMEENERLQKQVSQLVHENAYMKQQLQN) forms a coiled coil. The region spanning 157–385 (DASNPSGLLT…IAQETSGEVV (229 aa)) is the START domain.

Belongs to the HD-ZIP homeobox family. Class III subfamily. Expressed in seedlings, roots, stems, leaf sheaths and blades and panicles.

Its subcellular location is the nucleus. Probable transcription factor. In Oryza sativa subsp. indica (Rice), this protein is Homeobox-leucine zipper protein HOX9 (HOX9).